Reading from the N-terminus, the 239-residue chain is Myogenic factor 6 (239 aa).

The disordered stretch occupies residues Pro-28–Glu-59. One can recognise a bHLH domain in the interval Asp-92–Leu-143. A compositionally biased stretch (polar residues) spans Cys-182–Met-196. Positions Cys-182 to Lys-239 are disordered. A compositionally biased stretch (low complexity) spans Val-204–Ile-223.

In terms of assembly, efficient DNA binding requires dimerization with another bHLH protein.

It is found in the nucleus. Functionally, involved in muscle differentiation (myogenic factor). Induces fibroblasts to differentiate into myoblasts. Probable sequence specific DNA-binding protein. This Danio rerio (Zebrafish) protein is Myogenic factor 6 (myf6).